An 887-amino-acid chain; its full sequence is Tubulin polyglutamylase TTLL7 (887 aa).

Residues 1 to 21 (MPSLPQEGVIQGPSPLDLNTE) form a disordered region. The 353-residue stretch at 38-390 (KGTITANVAG…RTSDKRRNLA (353 aa)) folds into the TTL domain. ATP-binding positions include Lys-160, 166 to 167 (MG), 188 to 191 (QEYI), and 201 to 203 (KFD). Arg-227 contributes to the L-glutamate binding site. 249-250 (TN) contacts ATP. Positions 251, 252, and 271 each coordinate L-glutamate. Asp-336, Glu-349, and Asn-351 together coordinate Mg(2+). Residue Lys-367 participates in L-glutamate binding. The c-MTBD region stretch occupies residues 388–450 (NLAKQKAEAQ…ISREEHENRH (63 aa)). 2 disordered regions span residues 519-621 (MGKT…TRPF) and 651-676 (LPHSNDACSTNSQVSESLRQLKTKEQ). The segment covering 548-560 (SSDSSYDSSSSSS) has biased composition (low complexity). Polar residues-rich tracts occupy residues 593–621 (QQPSSIRRSVSCPRSISAQSPSSGDTRPF) and 656–670 (DACSTNSQVSESLRQ).

The protein belongs to the tubulin--tyrosine ligase family. Interacts with both alpha- and beta-tubulin (via C-terminal tubulin tails). The cofactor is Mg(2+). In terms of tissue distribution, highly expressed in the nervous system including spinal cord, thalamus, hippocampus, hypothalamus and cerebellum.

It is found in the cell projection. It localises to the cilium. The protein resides in the cytoplasm. The protein localises to the cytoskeleton. Its subcellular location is the cilium basal body. It is found in the dendrite. It localises to the perikaryon. The enzyme catalyses L-glutamyl-[protein] + L-glutamate + ATP = gamma-L-glutamyl-L-glutamyl-[protein] + ADP + phosphate + H(+). It catalyses the reaction (L-glutamyl)(n)-gamma-L-glutamyl-L-glutamyl-[protein] + L-glutamate + ATP = (L-glutamyl)(n+1)-gamma-L-glutamyl-L-glutamyl-[protein] + ADP + phosphate + H(+). Functionally, polyglutamylase which modifies tubulin, generating polyglutamate side chains of variable lengths on the gamma-carboxyl group of specific glutamate residues within the C-terminal tail of tubulin. Mediates both ATP-dependent initiation and elongation steps of the polyglutamylation reaction. Preferentially modifies the beta-tubulin tail over an alpha-tail. Competes with monoglycylase TTLL3 for modification site on beta-tubulin substrate, thereby creating an anticorrelation between glycylation and glutamylation reactions. Required for neurite growth; responsible for the strong increase in tubulin polyglutamylation during postnatal neuronal maturation. The sequence is that of Tubulin polyglutamylase TTLL7 from Homo sapiens (Human).